The chain runs to 473 residues: Photosystem II CP43 reaction center protein (473 aa).

The propeptide occupies 1-14; the sequence is MKTLYSLRRFYPVE. Threonine 15 carries the N-acetylthreonine modification. At threonine 15 the chain carries Phosphothreonine. Helical transmembrane passes span 69–93, 134–155, 178–200, 255–275, and 291–312; these read LFEV…PHLA, LIGP…KDRN, KALY…RKIT, KPFA…LSYS, and WFNN…ASQA. [CaMn4O5] cluster is bound at residue glutamate 367. A helical membrane pass occupies residues 447 to 471; that stretch reads RARAAAAGFEKGIDRDFEPVLSMTP.

It belongs to the PsbB/PsbC family. PsbC subfamily. PSII is composed of 1 copy each of membrane proteins PsbA, PsbB, PsbC, PsbD, PsbE, PsbF, PsbH, PsbI, PsbJ, PsbK, PsbL, PsbM, PsbT, PsbX, PsbY, PsbZ, Psb30/Ycf12, at least 3 peripheral proteins of the oxygen-evolving complex and a large number of cofactors. It forms dimeric complexes. Requires Binds multiple chlorophylls and provides some of the ligands for the Ca-4Mn-5O cluster of the oxygen-evolving complex. It may also provide a ligand for a Cl- that is required for oxygen evolution. PSII binds additional chlorophylls, carotenoids and specific lipids. as cofactor.

It localises to the plastid. It is found in the chloroplast thylakoid membrane. Functionally, one of the components of the core complex of photosystem II (PSII). It binds chlorophyll and helps catalyze the primary light-induced photochemical processes of PSII. PSII is a light-driven water:plastoquinone oxidoreductase, using light energy to abstract electrons from H(2)O, generating O(2) and a proton gradient subsequently used for ATP formation. The sequence is that of Photosystem II CP43 reaction center protein from Cryptomeria japonica (Japanese cedar).